The primary structure comprises 131 residues: MAPSLWKGLVGVGLFALAHAAFSAAQHRSYMRLTEKEDESLPIDIVLQTLLAFAVTCYGIVHIAGEFKDMDATSELKNKTFDTLRNHPSFYVFNHRGRVLFRPSDATNSSNLDALSSNTSLKLRKFDSLRR.

Topologically, residues 1–3 are cytoplasmic; that stretch reads MAP. A helical membrane pass occupies residues 4–22; that stretch reads SLWKGLVGVGLFALAHAAF. The Lumenal portion of the chain corresponds to 23–43; that stretch reads SAAQHRSYMRLTEKEDESLPI. A helical transmembrane segment spans residues 44 to 63; the sequence is DIVLQTLLAFAVTCYGIVHI. The Cytoplasmic portion of the chain corresponds to 64-131; the sequence is AGEFKDMDAT…KLRKFDSLRR (68 aa). Phosphoserine is present on Ser-120.

This sequence belongs to the membrane magnesium transporter (TC 1.A.67) family. As to quaternary structure, component of the ER membrane protein complex (EMC). Abundant in heart muscle and kidney with lower levels in liver and brain and very little expression in intestine or colon. In kidney, highest levels in distal convoluted tubule.

It is found in the endoplasmic reticulum membrane. It localises to the golgi apparatus membrane. Its subcellular location is the early endosome membrane. In terms of biological role, part of the endoplasmic reticulum membrane protein complex (EMC) that enables the energy-independent insertion into endoplasmic reticulum membranes of newly synthesized membrane proteins. Preferentially accommodates proteins with transmembrane domains that are weakly hydrophobic or contain destabilizing features such as charged and aromatic residues. Involved in the cotranslational insertion of multi-pass membrane proteins in which stop-transfer membrane-anchor sequences become ER membrane spanning helices. It is also required for the post-translational insertion of tail-anchored/TA proteins in endoplasmic reticulum membranes. By mediating the proper cotranslational insertion of N-terminal transmembrane domains in an N-exo topology, with translocated N-terminus in the lumen of the ER, controls the topology of multi-pass membrane proteins like the G protein-coupled receptors. By regulating the insertion of various proteins in membranes, it is indirectly involved in many cellular processes. May be involved Mg(2+) transport. This chain is ER membrane protein complex subunit 5, found in Mus musculus (Mouse).